Reading from the N-terminus, the 331-residue chain is MKQTVYIASPESQQIHVWNLNHEGALTLTQVVDVPGQVQPMVVSPDKRYLYVGVRPEFRVLAYRIAPDDGALTFAAESVLPGSPTHISTDHQGQFVFVGSYNAGNVSVTRLEDGLPVGVVDVVEGLDGCHSANISPDNRTLWVPALKQDRICLFTVSDDGHLVAQDPAEVTTVEGAGPRHMVFHPNEQYAYCVNELNSSVDVWELKDPHGNIECVQTLDMMPENFSDTRWAADIHITPDGRHLYACDRTASLITVFSVSEDGSVLSKEGFQPTETQPRGFNVDYSGKYLIAAGQKSHHISVYEIVGEQGLLHEKGRYAVGQGPMWVVVNAH.

Position 287 is an N6-acetyllysine (Lys-287).

Belongs to the cycloisomerase 2 family.

The catalysed reaction is 6-phospho-D-glucono-1,5-lactone + H2O = 6-phospho-D-gluconate + H(+). The protein operates within carbohydrate degradation; pentose phosphate pathway; D-ribulose 5-phosphate from D-glucose 6-phosphate (oxidative stage): step 2/3. Its function is as follows. Catalyzes the hydrolysis of 6-phosphogluconolactone to 6-phosphogluconate. This chain is 6-phosphogluconolactonase, found in Shigella flexneri.